A 464-amino-acid polypeptide reads, in one-letter code: tRNA modification GTPase MnmE (464 aa).

The (6S)-5-formyl-5,6,7,8-tetrahydrofolate site is built by R26, E92, and R131. Positions 227–385 constitute a TrmE-type G domain; the sequence is GIKVAILGRV…LISALKDYVS (159 aa). N237 provides a ligand contact to K(+). Residues 237–242, 256–262, and 281–284 contribute to the GTP site; these read NAGKSS, SNIAGTT, and DTAG. S241 lines the Mg(2+) pocket. 3 residues coordinate K(+): S256, I258, and T261. T262 contributes to the Mg(2+) binding site. Residue K464 participates in (6S)-5-formyl-5,6,7,8-tetrahydrofolate binding.

Belongs to the TRAFAC class TrmE-Era-EngA-EngB-Septin-like GTPase superfamily. TrmE GTPase family. As to quaternary structure, homodimer. Heterotetramer of two MnmE and two MnmG subunits. It depends on K(+) as a cofactor.

The protein localises to the cytoplasm. Its function is as follows. Exhibits a very high intrinsic GTPase hydrolysis rate. Involved in the addition of a carboxymethylaminomethyl (cmnm) group at the wobble position (U34) of certain tRNAs, forming tRNA-cmnm(5)s(2)U34. In Brachyspira hyodysenteriae (strain ATCC 49526 / WA1), this protein is tRNA modification GTPase MnmE.